Here is a 147-residue protein sequence, read N- to C-terminus: Hemoglobin subunit epsilon (147 aa).

The Globin domain occupies 3-147; that stretch reads HFTAEEKSTI…VATALAHKYH (145 aa). Phosphoserine is present on residues S14 and S51. Heme b contacts are provided by H64 and H93.

Belongs to the globin family. In terms of assembly, heterotetramer of two alpha chains and two epsilon chains in early embryonic hemoglobin Gower-2; two zeta chains and two epsilon chains in early embryonic hemoglobin Gower-1. Red blood cells.

In terms of biological role, the epsilon chain is a beta-type chain of early mammalian embryonic hemoglobin. The chain is Hemoglobin subunit epsilon (HBE1) from Microcebus murinus (Gray mouse lemur).